We begin with the raw amino-acid sequence, 394 residues long: Elongation factor Tu 1 (394 aa).

The tr-type G domain maps to Lys10–Ala204. The interval Gly19–Thr26 is G1. A GTP-binding site is contributed by Gly19 to Thr26. Thr26 lines the Mg(2+) pocket. The segment at Gly60–Asn64 is G2. Positions Asp81–Gly84 are G3. GTP contacts are provided by residues Asp81 to His85 and Asn136 to Asp139. The interval Asn136–Asp139 is G4. A G5 region spans residues Ser174–Leu176.

The protein belongs to the TRAFAC class translation factor GTPase superfamily. Classic translation factor GTPase family. EF-Tu/EF-1A subfamily. Monomer.

The protein resides in the cytoplasm. It catalyses the reaction GTP + H2O = GDP + phosphate + H(+). Its function is as follows. GTP hydrolase that promotes the GTP-dependent binding of aminoacyl-tRNA to the A-site of ribosomes during protein biosynthesis. The chain is Elongation factor Tu 1 from Shewanella frigidimarina (strain NCIMB 400).